The following is a 144-amino-acid chain: uncharacterized protein (144 aa).

A disordered region spans residues 98-127 (PLADGATVDSQASENGEKEAQPTPPKEGLL).

This is an uncharacterized protein from Aedes vexans (Inland floodwater mosquito).